The sequence spans 329 residues: DNA-directed RNA polymerase subunit alpha (329 aa).

An alpha N-terminal domain (alpha-NTD) region spans residues methionine 1–arginine 234. The tract at residues phenylalanine 248–leucine 329 is alpha C-terminal domain (alpha-CTD).

It belongs to the RNA polymerase alpha chain family. As to quaternary structure, homodimer. The RNAP catalytic core consists of 2 alpha, 1 beta, 1 beta' and 1 omega subunit. When a sigma factor is associated with the core the holoenzyme is formed, which can initiate transcription.

The enzyme catalyses RNA(n) + a ribonucleoside 5'-triphosphate = RNA(n+1) + diphosphate. DNA-dependent RNA polymerase catalyzes the transcription of DNA into RNA using the four ribonucleoside triphosphates as substrates. This is DNA-directed RNA polymerase subunit alpha from Shewanella violacea (strain JCM 10179 / CIP 106290 / LMG 19151 / DSS12).